A 673-amino-acid polypeptide reads, in one-letter code: Outer spore wall assembly protein SHE10 (673 aa).

Positions 1–24 are cleaved as a signal peptide; it reads MRRVRGVGNLLVTILVVLIGFKQA. Residues 503 to 568 adopt a coiled-coil conformation; that stretch reads ILRSQANIAF…LALEQGQGQE (66 aa). Disordered stretches follow at residues 530–551 and 587–673; these read LEQE…AENE and TPLG…SQAN. Acidic residues-rich tracts occupy residues 593–605 and 612–629; these read DNTD…DDAD and GDSE…EEDA. The stretch at 617–647 forms a coiled coil; that stretch reads NFYDSYEGDEEDASRELERLERESAERETLD. Residues 630–673 show a composition bias toward basic and acidic residues; sequence SRELERLERESAERETLDRLELGQRQKLQEEQHRDELHHSSQAN.

It belongs to the SHE10 family. In terms of assembly, component of the mitochondria-localized RNase mitochondrial RNA-processing (RNase MRP) composed of one single RNA encoded by the NME1 gene and at least 31 proteins. Absent in the nucleus-localized RNase MRP (NuMRP).

Its subcellular location is the mitochondrion. In terms of biological role, involved in spore wall assembly. May be a component of the mitochondrial RNase MRP (MtMRP), a ribonucleoprotein endoribonuclease involved in the cleaving RNA transcripts to generate primers for DNA replication in mitochondria. The polypeptide is Outer spore wall assembly protein SHE10 (Lachancea thermotolerans (strain ATCC 56472 / CBS 6340 / NRRL Y-8284) (Yeast)).